Here is a 72-residue protein sequence, read N- to C-terminus: DNA-directed RNA polymerase subunit omega (72 aa).

This sequence belongs to the RNA polymerase subunit omega family. The RNAP catalytic core consists of 2 alpha, 1 beta, 1 beta' and 1 omega subunit. When a sigma factor is associated with the core the holoenzyme is formed, which can initiate transcription.

The catalysed reaction is RNA(n) + a ribonucleoside 5'-triphosphate = RNA(n+1) + diphosphate. Promotes RNA polymerase assembly. Latches the N- and C-terminal regions of the beta' subunit thereby facilitating its interaction with the beta and alpha subunits. This chain is DNA-directed RNA polymerase subunit omega, found in Staphylococcus aureus (strain Mu3 / ATCC 700698).